Consider the following 287-residue polypeptide: Nucleotide-binding protein Asuc_0930 (287 aa).

G8–S15 serves as a coordination point for ATP. Position 56–59 (D56–N59) interacts with GTP.

This sequence belongs to the RapZ-like family.

Its function is as follows. Displays ATPase and GTPase activities. The protein is Nucleotide-binding protein Asuc_0930 of Actinobacillus succinogenes (strain ATCC 55618 / DSM 22257 / CCUG 43843 / 130Z).